Consider the following 429-residue polypeptide: Histidine--tRNA ligase (429 aa).

The protein belongs to the class-II aminoacyl-tRNA synthetase family. In terms of assembly, homodimer.

The protein localises to the cytoplasm. The enzyme catalyses tRNA(His) + L-histidine + ATP = L-histidyl-tRNA(His) + AMP + diphosphate + H(+). This Streptococcus pneumoniae serotype 19F (strain G54) protein is Histidine--tRNA ligase.